The sequence spans 383 residues: S-adenosylmethionine synthase (383 aa).

Histidine 15 provides a ligand contact to ATP. A Mg(2+)-binding site is contributed by aspartate 17. Glutamate 43 provides a ligand contact to K(+). 2 residues coordinate L-methionine: glutamate 56 and glutamine 99. Residues 99–109 are flexible loop; the sequence is QSPDINQGVDK. ATP is bound by residues 164-166, 230-231, aspartate 239, 245-246, alanine 262, and lysine 266; these read DAK, RF, and RK. Aspartate 239 lines the L-methionine pocket. Lysine 270 is a binding site for L-methionine.

The protein belongs to the AdoMet synthase family. In terms of assembly, homotetramer; dimer of dimers. Requires Mg(2+) as cofactor. K(+) is required as a cofactor.

It localises to the cytoplasm. It catalyses the reaction L-methionine + ATP + H2O = S-adenosyl-L-methionine + phosphate + diphosphate. It participates in amino-acid biosynthesis; S-adenosyl-L-methionine biosynthesis; S-adenosyl-L-methionine from L-methionine: step 1/1. Functionally, catalyzes the formation of S-adenosylmethionine (AdoMet) from methionine and ATP. The overall synthetic reaction is composed of two sequential steps, AdoMet formation and the subsequent tripolyphosphate hydrolysis which occurs prior to release of AdoMet from the enzyme. The sequence is that of S-adenosylmethionine synthase from Vibrio atlanticus (strain LGP32) (Vibrio splendidus (strain Mel32)).